The sequence spans 429 residues: Ribosomal RNA small subunit methyltransferase B (429 aa).

Residues 254 to 260 (CAAPGGK), D277, D303, and D322 contribute to the S-adenosyl-L-methionine site. The active-site Nucleophile is the C375. The interval 397–419 (ALSETGTPDQPGQQNLPGGEEGD) is disordered. Polar residues predominate over residues 400–412 (ETGTPDQPGQQNL).

Belongs to the class I-like SAM-binding methyltransferase superfamily. RsmB/NOP family.

It localises to the cytoplasm. The enzyme catalyses cytidine(967) in 16S rRNA + S-adenosyl-L-methionine = 5-methylcytidine(967) in 16S rRNA + S-adenosyl-L-homocysteine + H(+). Specifically methylates the cytosine at position 967 (m5C967) of 16S rRNA. The polypeptide is Ribosomal RNA small subunit methyltransferase B (Salmonella paratyphi A (strain ATCC 9150 / SARB42)).